Reading from the N-terminus, the 101-residue chain is NADH-ubiquinone oxidoreductase chain 5 (101 aa).

Transmembrane regions (helical) follow at residues 12–32, 48–68, and 79–99; these read IALFTVFIIDIIKFYILSGVI, FLFITMGFLFFIFTTWYFICF, and LVIYFRYNLKYCLFFCMLFII.

Belongs to the complex I subunit 5 family.

It localises to the mitochondrion inner membrane. The catalysed reaction is a ubiquinone + NADH + 5 H(+)(in) = a ubiquinol + NAD(+) + 4 H(+)(out). In terms of biological role, core subunit of the mitochondrial membrane respiratory chain NADH dehydrogenase (Complex I) that is believed to belong to the minimal assembly required for catalysis. Complex I functions in the transfer of electrons from NADH to the respiratory chain. The immediate electron acceptor for the enzyme is believed to be ubiquinone. The chain is NADH-ubiquinone oxidoreductase chain 5 (ND5) from Leishmania tarentolae (Sauroleishmania tarentolae).